The sequence spans 147 residues: Ubiquitin-conjugating enzyme E2 D3 (147 aa).

Residues methionine 1–methionine 147 form the UBC core domain. Cysteine 21 and cysteine 107 are oxidised to a cystine. Cysteine 85 (glycyl thioester intermediate) is an active-site residue.

This sequence belongs to the ubiquitin-conjugating enzyme family. In terms of assembly, interacts with SCF (SKP1-CUL1-F-box protein) E3 ubiquitin ligase complex; when Cullin is neddylated, the interaction between the E2 and the SCF complex is strengthened. Interacts with DAPK3. Interacts with BRCA1; the DNA damage checkpoint promotes the association with BRCA1 after ionizing radiation. Interacts non-covalently with ubiquitin. Interacts with E3 ubiquitin-protein ligase CBLC. Interacts with UBTD1. Interacts with RIGI and RNF135; involved in RIGI ubiquitination and activation. Phosphorylated by AURKB.

Its subcellular location is the cell membrane. The protein resides in the endosome membrane. The enzyme catalyses S-ubiquitinyl-[E1 ubiquitin-activating enzyme]-L-cysteine + [E2 ubiquitin-conjugating enzyme]-L-cysteine = [E1 ubiquitin-activating enzyme]-L-cysteine + S-ubiquitinyl-[E2 ubiquitin-conjugating enzyme]-L-cysteine.. The catalysed reaction is S-ubiquitinyl-[E1 ubiquitin-activating enzyme]-L-cysteine + [acceptor protein]-L-lysine = [E1 ubiquitin-activating enzyme]-L-cysteine + N(6)-monoubiquitinyl-[acceptor protein]-L-lysine.. It participates in protein modification; protein ubiquitination. Functionally, accepts ubiquitin from the E1 complex and catalyzes its covalent attachment to other proteins. In vitro catalyzes 'Lys-11'-, as well as 'Lys-48'-linked polyubiquitination. Cooperates with the E2 CDC34 and the SCF(FBXW11) E3 ligase complex for the polyubiquitination of NFKBIA leading to its subsequent proteasomal degradation. Acts as an initiator E2, priming the phosphorylated NFKBIA target at positions 'Lys-21' and/or 'Lys-22' with a monoubiquitin. Ubiquitin chain elongation is then performed by CDC34, building ubiquitin chains from the UBE2D3-primed NFKBIA-linked ubiquitin. Also acts as an initiator E2, in conjunction with RNF8, for the priming of PCNA. Monoubiquitination of PCNA, and its subsequent polyubiquitination, are essential events in the operation of the DNA damage tolerance (DDT) pathway that is activated after DNA damage caused by UV or chemical agents during S-phase. Associates with the BRCA1/BARD1 E3 ligase complex to perform ubiquitination at DNA damage sites following ionizing radiation leading to DNA repair. Targets DAPK3 for ubiquitination which influences promyelocytic leukemia protein nuclear body (PML-NB) formation in the nucleus. In conjunction with the MDM2 and TOPORS E3 ligases, functions ubiquitination of p53/TP53. In conjunction with the CBL E3 ligase, targets EGFR for polyubiquitination at the plasma membrane as well as during its internalization and transport on endosomes. In conjunction with the STUB1 E3 quality control E3 ligase, ubiquitinates unfolded proteins to catalyze their immediate destruction. Together with RNF135, catalyzes the viral RNA-dependent 'Lys-63'-linked polyubiquitination of RIGI to activate the downstream signaling pathway that leads to interferon beta production. Together with ZNF598, catalyzes ubiquitination of 40S ribosomal proteins in response to ribosome collisions. In cooperation with the GATOR2 complex, catalyzes 'Lys-6'-linked ubiquitination of NPRL2. This Bos taurus (Bovine) protein is Ubiquitin-conjugating enzyme E2 D3 (UBE2D3).